A 188-amino-acid chain; its full sequence is Peptide deformylase (188 aa).

Residues C94 and H136 each coordinate Fe cation. The active site involves E137. H140 lines the Fe cation pocket.

The protein belongs to the polypeptide deformylase family. Fe(2+) is required as a cofactor.

It catalyses the reaction N-terminal N-formyl-L-methionyl-[peptide] + H2O = N-terminal L-methionyl-[peptide] + formate. Its function is as follows. Removes the formyl group from the N-terminal Met of newly synthesized proteins. Requires at least a dipeptide for an efficient rate of reaction. N-terminal L-methionine is a prerequisite for activity but the enzyme has broad specificity at other positions. This is Peptide deformylase from Pelodictyon phaeoclathratiforme (strain DSM 5477 / BU-1).